We begin with the raw amino-acid sequence, 465 residues long: MQPKYDYDAIIIGSGPGGEGAAMGLTKRGARVAIIERYDNVGGGCTHWGTIPSKALRQAVSRIIEINQSPLHGNTRLPHTGFSDILCHADQVINQQTHMRQGFYERNHCQIFTGEASFVDEHQVQIHYGDNTTETLSAENIVIACGSRPYQPQDVDFDHPRIYDSDSILDLKHDPHHVIIYGAGVIGCEYASIFRGMNVKVDLINTRDRLLAFLDQEMSDALSYHFWENGVVIRHNEEYEEIKGLDDGVEVRFRSGKRMKADCLLYANGRTGNTDTLKLDKVELEADSRGLIKVNSMYQTAARHIYAVGDVIGYPSLASAAYDQGRIAAQVIIKGQANVQLIENIPTGIYTIPEISSVGKTEQELTAMKVPYEVGRAQFKHLARAQIVGMNVGSLKLLFHRETKQILGIHCFGERAAEIIHIGQAIMEQKGEGNTIEYFVNTTFNYPTMAEAYRVAALNGLNRLF.

36 to 45 contacts FAD; the sequence is ERYDNVGGGC.

The protein belongs to the class-I pyridine nucleotide-disulfide oxidoreductase family. FAD serves as cofactor.

Its subcellular location is the cytoplasm. The enzyme catalyses NAD(+) + NADPH = NADH + NADP(+). Functionally, conversion of NADPH, generated by peripheral catabolic pathways, to NADH, which can enter the respiratory chain for energy generation. In Sodalis glossinidius (strain morsitans), this protein is Soluble pyridine nucleotide transhydrogenase.